The chain runs to 464 residues: Kynureninase (464 aa).

Position 1 is an N-acetylmethionine (methionine 1). Pyridoxal 5'-phosphate contacts are provided by residues leucine 137, threonine 138, 165–168 (FPSD), serine 221, aspartate 250, histidine 253, and tyrosine 275. At lysine 276 the chain carries N6-(pyridoxal phosphate)lysine. 2 residues coordinate pyridoxal 5'-phosphate: tryptophan 305 and asparagine 333.

Belongs to the kynureninase family. In terms of assembly, homodimer. It depends on pyridoxal 5'-phosphate as a cofactor. High levels in liver and kidney. Also detected in heart, retina, ovary. Lung, testis and brain.

Its subcellular location is the cytoplasm. The protein localises to the cytosol. It carries out the reaction L-kynurenine + H2O = anthranilate + L-alanine + H(+). It catalyses the reaction 3-hydroxy-L-kynurenine + H2O = 3-hydroxyanthranilate + L-alanine + H(+). It participates in amino-acid degradation; L-kynurenine degradation; L-alanine and anthranilate from L-kynurenine: step 1/1. Its pathway is cofactor biosynthesis; NAD(+) biosynthesis; quinolinate from L-kynurenine: step 2/3. With respect to regulation, inhibited by o-methylbenzoylalanine (OMBA). Functionally, catalyzes the cleavage of L-kynurenine (L-Kyn) and L-3-hydroxykynurenine (L-3OHKyn) into anthranilic acid (AA) and 3-hydroxyanthranilic acid (3-OHAA), respectively. Has a preference for the L-3-hydroxy form. Also has cysteine-conjugate-beta-lyase activity. The protein is Kynureninase (Kynu) of Rattus norvegicus (Rat).